A 286-amino-acid polypeptide reads, in one-letter code: Thymidylate synthase (286 aa).

Residue arginine 21 participates in dUMP binding. Asparagine 51 is a (6R)-5,10-methylene-5,6,7,8-tetrahydrofolate binding site. Residue 150-151 (RR) participates in dUMP binding. Cysteine 170 acts as the Nucleophile in catalysis. Residues 190–193 (RSAD), asparagine 201, and 231–233 (HIY) contribute to the dUMP site. Aspartate 193 lines the (6R)-5,10-methylene-5,6,7,8-tetrahydrofolate pocket. Residue alanine 285 coordinates (6R)-5,10-methylene-5,6,7,8-tetrahydrofolate.

This sequence belongs to the thymidylate synthase family. Bacterial-type ThyA subfamily. Homodimer.

The protein resides in the cytoplasm. It carries out the reaction dUMP + (6R)-5,10-methylene-5,6,7,8-tetrahydrofolate = 7,8-dihydrofolate + dTMP. The protein operates within pyrimidine metabolism; dTTP biosynthesis. Its function is as follows. Catalyzes the reductive methylation of 2'-deoxyuridine-5'-monophosphate (dUMP) to 2'-deoxythymidine-5'-monophosphate (dTMP) while utilizing 5,10-methylenetetrahydrofolate (mTHF) as the methyl donor and reductant in the reaction, yielding dihydrofolate (DHF) as a by-product. This enzymatic reaction provides an intracellular de novo source of dTMP, an essential precursor for DNA biosynthesis. This Mycoplasmopsis pulmonis (strain UAB CTIP) (Mycoplasma pulmonis) protein is Thymidylate synthase.